Consider the following 275-residue polypeptide: Large ribosomal subunit protein uL2 (275 aa).

Residues 35 to 49 (DSQSSTAGRNNNGRI) are compositionally biased toward polar residues. Disordered stretches follow at residues 35–59 (DSQSSTAGRNNNGRITTRHKGGGHK) and 224–275 (AMNP…RHKR). Residues 50 to 59 (TTRHKGGGHK) show a composition bias toward basic residues.

Belongs to the universal ribosomal protein uL2 family. In terms of assembly, part of the 50S ribosomal subunit. Forms a bridge to the 30S subunit in the 70S ribosome.

Its function is as follows. One of the primary rRNA binding proteins. Required for association of the 30S and 50S subunits to form the 70S ribosome, for tRNA binding and peptide bond formation. It has been suggested to have peptidyltransferase activity; this is somewhat controversial. Makes several contacts with the 16S rRNA in the 70S ribosome. The polypeptide is Large ribosomal subunit protein uL2 (Burkholderia orbicola (strain AU 1054)).